The primary structure comprises 161 residues: Probable K(+)/H(+) antiporter subunit E (161 aa).

The next 2 helical transmembrane spans lie at 4-21 and 28-50; these read WFPYPLLSIALLLMWLLL and GSIVLGLVVSTVLAWVTLNLQPA.

It belongs to the CPA3 antiporters (TC 2.A.63) subunit E family. May form a hetero-oligomeric complex that consists of six subunits: PhaAB, PhaC, PhaD, PhaE, PhaF and PhaG.

The protein resides in the cell membrane. Functionally, part of a K(+) efflux system which is required for the adaptation of R.meliloti to alkaline pH as well as for the infection process during symbiotic nodule development. This Rhizobium meliloti (strain 1021) (Ensifer meliloti) protein is Probable K(+)/H(+) antiporter subunit E (phaE).